A 190-amino-acid chain; its full sequence is GTP cyclohydrolase 1 (190 aa).

Zn(2+) contacts are provided by Cys-75, His-78, and Cys-146.

It belongs to the GTP cyclohydrolase I family. As to quaternary structure, toroid-shaped homodecamer, composed of two pentamers of five dimers.

It carries out the reaction GTP + H2O = 7,8-dihydroneopterin 3'-triphosphate + formate + H(+). Its pathway is cofactor biosynthesis; 7,8-dihydroneopterin triphosphate biosynthesis; 7,8-dihydroneopterin triphosphate from GTP: step 1/1. In Campylobacter jejuni (strain RM1221), this protein is GTP cyclohydrolase 1.